Reading from the N-terminus, the 226-residue chain is Phosphoribosylformylglycinamidine synthase subunit PurQ (226 aa).

The Glutamine amidotransferase type-1 domain occupies 4 to 226 (RIGVVTFPGS…TSILKKLVNA (223 aa)). The active-site Nucleophile is cysteine 87. Residues histidine 196 and glutamate 198 contribute to the active site.

As to quaternary structure, part of the FGAM synthase complex composed of 1 PurL, 1 PurQ and 2 PurS subunits.

It localises to the cytoplasm. It carries out the reaction N(2)-formyl-N(1)-(5-phospho-beta-D-ribosyl)glycinamide + L-glutamine + ATP + H2O = 2-formamido-N(1)-(5-O-phospho-beta-D-ribosyl)acetamidine + L-glutamate + ADP + phosphate + H(+). The enzyme catalyses L-glutamine + H2O = L-glutamate + NH4(+). It functions in the pathway purine metabolism; IMP biosynthesis via de novo pathway; 5-amino-1-(5-phospho-D-ribosyl)imidazole from N(2)-formyl-N(1)-(5-phospho-D-ribosyl)glycinamide: step 1/2. Its function is as follows. Part of the phosphoribosylformylglycinamidine synthase complex involved in the purines biosynthetic pathway. Catalyzes the ATP-dependent conversion of formylglycinamide ribonucleotide (FGAR) and glutamine to yield formylglycinamidine ribonucleotide (FGAM) and glutamate. The FGAM synthase complex is composed of three subunits. PurQ produces an ammonia molecule by converting glutamine to glutamate. PurL transfers the ammonia molecule to FGAR to form FGAM in an ATP-dependent manner. PurS interacts with PurQ and PurL and is thought to assist in the transfer of the ammonia molecule from PurQ to PurL. The protein is Phosphoribosylformylglycinamidine synthase subunit PurQ of Streptomyces coelicolor (strain ATCC BAA-471 / A3(2) / M145).